The chain runs to 279 residues: Pantothenate synthetase (279 aa).

27–34 lines the ATP pocket; sequence MGYLHEGH. His34 acts as the Proton donor in catalysis. A (R)-pantoate-binding site is contributed by Gln58. A beta-alanine-binding site is contributed by Gln58. ATP is bound at residue 144-147; sequence GKKD. Gln150 contributes to the (R)-pantoate binding site. Residues Val173 and 181–184 contribute to the ATP site; that span reads MSSR.

Belongs to the pantothenate synthetase family. As to quaternary structure, homodimer.

Its subcellular location is the cytoplasm. It carries out the reaction (R)-pantoate + beta-alanine + ATP = (R)-pantothenate + AMP + diphosphate + H(+). The protein operates within cofactor biosynthesis; (R)-pantothenate biosynthesis; (R)-pantothenate from (R)-pantoate and beta-alanine: step 1/1. Functionally, catalyzes the condensation of pantoate with beta-alanine in an ATP-dependent reaction via a pantoyl-adenylate intermediate. The polypeptide is Pantothenate synthetase (Citrifermentans bemidjiense (strain ATCC BAA-1014 / DSM 16622 / JCM 12645 / Bem) (Geobacter bemidjiensis)).